The chain runs to 358 residues: Stearoyl-CoA desaturase 2 (358 aa).

The Cytoplasmic portion of the chain corresponds to 1-71 (MPAHILQEIS…EGPPPKLEYV (71 aa)). The interval 14–43 (SATTTITAPPSGGQQNGGEKFEKNPHHWGA) is disordered. Residues 32–43 (EKFEKNPHHWGA) are compositionally biased toward basic and acidic residues. A helical transmembrane segment spans residues 72 to 92 (WRNIVLMALLHIGALYGITLV). N74 is a substrate binding site. At 93-96 (PSCK) the chain is on the lumenal side. Residues 97-117 (VYTCLFAYLYYVISALGITAG) traverse the membrane as a helical segment. Over 118–216 (AHRLWSHRTY…EKLVMFQRRY (99 aa)) the chain is Cytoplasmic. Residues H119 and H124 each contribute to the Fe cation site. Positions 119–124 (HRLWSH) match the Histidine box-1 motif. Substrate is bound by residues N147, R154, and D155. Residues H156, H159, and H160 each coordinate Fe cation. Residues 156–160 (HRAHH) carry the Histidine box-2 motif. Substrate-binding residues include R187 and K188. A helical membrane pass occupies residues 217-236 (YKPGLLLMCFILPTLVPWYC). The Lumenal portion of the chain corresponds to 237-240 (WGET). The helical transmembrane segment at 241-262 (FVNSLCVSTFLRYAVVLNATWL) threads the bilayer. W261 lines the substrate pocket. Over 263-358 (VNSAAHLYGY…RTGEESCKSG (96 aa)) the chain is Cytoplasmic. Residues H268, H297, H300, and H301 each contribute to the Fe cation site. Positions 297-301 (HNYHH) match the Histidine box-3 motif.

The protein belongs to the fatty acid desaturase type 1 family. Requires Fe(2+) as cofactor. In terms of tissue distribution, detected in brain and adipose tissue, and at much lower levels in testis. Detected in liver when rats are kept on a fat-free diet, but not when their food contains unsaturated fatty acids.

It is found in the endoplasmic reticulum membrane. The protein resides in the microsome membrane. It catalyses the reaction octadecanoyl-CoA + 2 Fe(II)-[cytochrome b5] + O2 + 2 H(+) = (9Z)-octadecenoyl-CoA + 2 Fe(III)-[cytochrome b5] + 2 H2O. It carries out the reaction hexadecanoyl-CoA + 2 Fe(II)-[cytochrome b5] + O2 + 2 H(+) = (9Z)-hexadecenoyl-CoA + 2 Fe(III)-[cytochrome b5] + 2 H2O. In terms of biological role, stearoyl-CoA desaturase that utilizes O(2) and electrons from reduced cytochrome b5 to introduce the first double bond into saturated fatty acyl-CoA substrates. Catalyzes the insertion of a cis double bond at the delta-9 position into fatty acyl-CoA substrates including palmitoyl-CoA and stearoyl-CoA. Gives rise to a mixture of 16:1 and 18:1 unsaturated fatty acids. Contributes to the biosynthesis of membrane phospholipids, cholesterol esters and triglycerides, especially during embryonic development and in neonates. Important for normal permeability barrier function of the skin in neonates. This Rattus norvegicus (Rat) protein is Stearoyl-CoA desaturase 2 (Scd2).